A 770-amino-acid polypeptide reads, in one-letter code: MAYGWWRRRRRRWRRWRRRPWRRRWRTRRRRPARRRGRRRNVRRRRRGGRWRRRYRRWKRKGRRRKKAKIIIRQWQPNYRRRCNIVGYIPVLICGENTVSRNYATHSDDTNYPGPFGGGMTTDKFTLRILYDEYKRFMNYWTASNEDLDLCRYLGVNLYFFRHPDVDFIIKINTMPPFLDTELTAPSIHPGMLALDKRARWIPSLKSRPGKKHYIKIRVGAPRMFTDKWYPQTDLCDMVLLTVYATAADMQYPFGSPLTDSVVVNFQVLQSMYDKTISILPDEKSQREILLNKIASYIPFYNTTQTIAQLKPFIDAGNVTSGATATTWASYINTTKFTTATTTTYAYPGTNRPPVTMLTCNDSWYRGTVYNTQIQQLPIKAAKLYLEATKTLLGNTFTNEDYTLEYHGGLYSSIWLSPGRSYFETTGAYTDIKYNPFTDRGEGNMLWIDWLSKKNMNYDKVQSKCLISDLPLWAAAYGYVEFCAKSTGDQNIHMNARLLIRSPFTDPQLLVHTDPTKGFVPYSLNFGNGKMPGGSSNVPIRMRAKWYPTLFHQQEVLEALAQSGPFAYHSDIKKVSLGMKYRFKWIWGGNPVRQQVVRNPCKETHSSGNRVPRSLQIVDPKYNSPELTFHTWDFRRGLFGPKAIQRMQQQPTTTDIFSAGRKRPRRDTEVYHSSQEGEQKESLLFPPVKLLRRVPPWEDSQQEESGSQSSEEETQTVSQQLKQQLQQQRILGVKLRLLFNQVQKIQQNQDINPTLLPRGGDLASLFQIAP.

2 disordered regions span residues 645 to 682 (QRMQQQPTTTDIFSAGRKRPRRDTEVYHSSQEGEQKES) and 697 to 717 (WEDSQQEESGSQSSEEETQTV). The segment covering 646-656 (RMQQQPTTTDI) has biased composition (polar residues). Over residues 666–681 (RDTEVYHSSQEGEQKE) the composition is skewed to basic and acidic residues. Low complexity predominate over residues 703–717 (EESGSQSSEEETQTV).

It belongs to the anelloviridae capsid protein family.

It localises to the virion. Its function is as follows. Self-assembles to form an icosahedral capsid with a T=1 symmetry, about 30 nm in diameter, and consisting of 60 capsid proteins. The capsid encapsulates the genomic DNA. Capsid protein is involved in attachment and entry into the host cell. This is Capsid protein from Homo sapiens (Human).